The sequence spans 358 residues: Plancitoxin-1 (358 aa).

An N-terminal signal peptide occupies residues 1 to 26 (MPSSVIMFTFLALTVLTAVMVGTSEA). N-linked (GlcNAc...) asparagine glycosylation is present at Asn-274. His-303 is an active-site residue.

This sequence belongs to the DNase II family. As to quaternary structure, plancitoxin is a heterodimer of alpha and beta subunits; disulfide-linked by a single disulfide bond. As to expression, venom gland.

It localises to the secreted. It carries out the reaction Endonucleolytic cleavage to nucleoside 3'-phosphates and 3'-phosphooligonucleotide end-products.. In terms of biological role, hydrolyzes DNA with an optimum pH of 7.2. Is potently hepatotoxic. It induces caspase-independent apoptosis (on rat liver cells) through the following procedure: binding to a specific receptor in the cytoplasmic membrane, entering the cell, entering the nucleus and degrading DNA. The chain is Plancitoxin-1 from Acanthaster planci (Crown-of-thorns starfish).